The chain runs to 205 residues: Small ribosomal subunit protein uS5 (205 aa).

Residues 49 to 112 (LVDEVLCIDM…TNAKLNIVKV (64 aa)) enclose the S5 DRBM domain.

The protein belongs to the universal ribosomal protein uS5 family. Part of the 30S ribosomal subunit. Contacts protein S4.

Functionally, with S4 and S12 plays an important role in translational accuracy. The protein is Small ribosomal subunit protein uS5 of Methanocorpusculum labreanum (strain ATCC 43576 / DSM 4855 / Z).